Reading from the N-terminus, the 444-residue chain is Phosphomethylpyrimidine synthase (444 aa).

Substrate is bound by residues Asn80, Met109, Tyr138, His174, 194–196 (SRG), 235–238 (DSLR), and Glu274. His278 contacts Zn(2+). A substrate-binding site is contributed by Tyr301. His342 contacts Zn(2+). 3 residues coordinate [4Fe-4S] cluster: Cys422, Cys425, and Cys430.

Belongs to the ThiC family. Homodimer. [4Fe-4S] cluster is required as a cofactor.

The enzyme catalyses 5-amino-1-(5-phospho-beta-D-ribosyl)imidazole + S-adenosyl-L-methionine = 4-amino-2-methyl-5-(phosphooxymethyl)pyrimidine + CO + 5'-deoxyadenosine + formate + L-methionine + 3 H(+). Its pathway is cofactor biosynthesis; thiamine diphosphate biosynthesis. In terms of biological role, catalyzes the synthesis of the hydroxymethylpyrimidine phosphate (HMP-P) moiety of thiamine from aminoimidazole ribotide (AIR) in a radical S-adenosyl-L-methionine (SAM)-dependent reaction. This Nitratiruptor sp. (strain SB155-2) protein is Phosphomethylpyrimidine synthase.